A 251-amino-acid polypeptide reads, in one-letter code: DNA repair protein RecO (251 aa).

Belongs to the RecO family.

Functionally, involved in DNA repair and RecF pathway recombination. In Streptococcus mutans serotype c (strain ATCC 700610 / UA159), this protein is DNA repair protein RecO.